The sequence spans 179 residues: Inner membrane-spanning protein YciB (179 aa).

Transmembrane regions (helical) follow at residues 3 to 23 (FLFD…ADIY), 24 to 44 (TATA…WFRH), 49 to 69 (PMQW…LVLH), 76 to 96 (WKPT…VIGW), 121 to 141 (AAWA…AYQF), and 149 to 169 (FKLF…SVWL).

The protein belongs to the YciB family.

The protein localises to the cell inner membrane. Functionally, plays a role in cell envelope biogenesis, maintenance of cell envelope integrity and membrane homeostasis. The sequence is that of Inner membrane-spanning protein YciB from Cupriavidus necator (strain ATCC 17699 / DSM 428 / KCTC 22496 / NCIMB 10442 / H16 / Stanier 337) (Ralstonia eutropha).